The following is a 483-amino-acid chain: V-type proton ATPase subunit B 2 (483 aa).

Belongs to the ATPase alpha/beta chains family. V-ATPase is a heteromultimeric enzyme composed of a peripheral catalytic V1 complex (main components: subunits A, B, C, D, E, and F) attached to an integral membrane V0 proton pore complex (main component: the proteolipid protein).

Non-catalytic subunit of the peripheral V1 complex of vacuolar ATPase. V-ATPase is responsible for acidifying a variety of intracellular compartments in eukaryotic cells. This Hordeum vulgare (Barley) protein is V-type proton ATPase subunit B 2.